Reading from the N-terminus, the 400-residue chain is Renin (400 aa).

A signal peptide spans Met-1–Ser-17. A propeptide spans Leu-18–Lys-59 (activation peptide). An N-linked (GlcNAc...) asparagine glycan is attached at Asn-65. Positions Tyr-80–Ala-397 constitute a Peptidase A1 domain. The active site involves Asp-98. Cys-111 and Cys-118 are joined by a disulfide. Asn-135 carries N-linked (GlcNAc...) asparagine glycosylation. Cysteines 277 and 281 form a disulfide. Asp-286 is an active-site residue. An intrachain disulfide couples Cys-320 to Cys-356. The N-linked (GlcNAc...) asparagine glycan is linked to Asn-353.

Belongs to the peptidase A1 family. As to quaternary structure, interacts with ATP6AP2. In terms of tissue distribution, kidney.

Its subcellular location is the secreted. It localises to the membrane. It catalyses the reaction Cleavage of Leu-|-Xaa bond in angiotensinogen to generate angiotensin I.. Its activity is regulated as follows. Interaction with ATP6AP2 results in a 5-fold increased efficiency in angiotensinogen processing. Renin is a highly specific endopeptidase, whose only known function is to generate angiotensin I from angiotensinogen in the plasma, initiating a cascade of reactions that produce an elevation of blood pressure and increased sodium retention by the kidney. The polypeptide is Renin (REN) (Ovis aries (Sheep)).